Consider the following 125-residue polypeptide: Small ribosomal subunit protein bS6 (125 aa).

The disordered stretch occupies residues 99 to 125 (ASPMVKAREERKPLTEVENNDFEDAEE). Basic and acidic residues predominate over residues 104 to 113 (KAREERKPLT). The segment covering 116–125 (ENNDFEDAEE) has biased composition (acidic residues).

Belongs to the bacterial ribosomal protein bS6 family.

Its function is as follows. Binds together with bS18 to 16S ribosomal RNA. This is Small ribosomal subunit protein bS6 from Histophilus somni (strain 2336) (Haemophilus somnus).